Reading from the N-terminus, the 106-residue chain is UPF0473 protein LCABL_08490 (106 aa).

It belongs to the UPF0473 family.

The protein is UPF0473 protein LCABL_08490 of Lacticaseibacillus casei (strain BL23) (Lactobacillus casei).